We begin with the raw amino-acid sequence, 332 residues long: Long form salivary protein D7L1 (332 aa).

The first 21 residues, 1 to 21 (MHSPKSFLLLAVVFVALRVTA), serve as a signal peptide directing secretion. 2 disulfides stabilise this stretch: Cys40–Cys77 and Cys73–Cys133. Residue Trp61 participates in leukotriene E4 binding. A leukotriene E4-binding site is contributed by Lys176. Cystine bridges form between Cys184/Cys219, Cys200/Cys331, and Cys259/Cys278. Residues Glu185 and Arg203 each coordinate noradrenaline. Positions 294 and 297 each coordinate noradrenaline.

It belongs to the PBP/GOBP family. In terms of tissue distribution, female mosquito salivary gland (at protein level).

The protein resides in the secreted. In terms of biological role, modulates blood feeding of female mosquitoes on vertebrate species by binding and sequestering different mediators involved in the host response, such as biogenic amines and eicosanoids. Binds dopamine, serotonin, histamine, tryptamine, adrenaline, noradrenaline, leukotriene B4, leukotriene C4, leukotriene D4, leukotriene E4 and U-46619, a stable analog of thromboxane A2. Inhibits platelet aggregation induced by serotonin and low doses of thromboxane A2 analog U-46619 but not by high doses of U-46619, collagen or ADP. Prevents leukocyte recruitment. This chain is Long form salivary protein D7L1, found in Aedes albopictus (Asian tiger mosquito).